We begin with the raw amino-acid sequence, 199 residues long: 5'-deoxynucleotidase YfbR (199 aa).

Residues 18–19 (RW) and H33 each bind substrate. Positions 30–142 (VSEHSLQVAM…VKQADALCAY (113 aa)) constitute an HD domain. Residues H33, H68, and D69 each contribute to the a divalent metal cation site. Residues D69, 77–80 (DLPT), and D137 each bind substrate. A divalent metal cation is bound at residue D137.

Belongs to the 5DNU family. In terms of assembly, homodimer. It depends on a divalent metal cation as a cofactor.

It localises to the cytoplasm. The enzyme catalyses a 2'-deoxyribonucleoside 5'-phosphate + H2O = a 2'-deoxyribonucleoside + phosphate. Its function is as follows. Catalyzes the strictly specific dephosphorylation of 2'-deoxyribonucleoside 5'-monophosphates. This chain is 5'-deoxynucleotidase YfbR, found in Salmonella typhi.